An 889-amino-acid chain; its full sequence is MAELPQSRINERNITSEMRESFLDYAMSVIVARALPDVRDGLKPVHRRILYGLNEQGMTPDKSYKKSARIVGDVMGKYHPHGDLSIYEAMVRMAQDFSYRYPLVDGQGNFGSMDGDGAAAMRYTEARMTKITLELLRDINKDTIDFIDNYDGNEREPSVLPARFPNLLANGASGIAVGMATNIPPHNLTELINGVLSLSKNPDISIAELMEDIEGPDFPTAGLILGKSGIRRAYETGRGSIQMRSRAVIEERGGGRQRIVVTEIPFQVNKARMIEKIAELVRDKKIDGITDLRDETSLRTGVRVVIDVRKDANASVILNNLYKQTPLQTSFGVNMIALVNGRPKLINLKEALVHYLEHQKTVVRRRTQYNLRKAKDRAHILEGLRIALDHIDEIISTIRESDTDKVAMKSLQQRFKLSEKQAQAILDMRLRRLTGLERDKIEAEYNELLNYISELETILADEEVLLQLVRDELTEIRDRFGDDRRTEIQLGGFEDLEDEDLIPEEQIVITLSHNNYIKRLPVSTYRAQNRGGRGVQGMNTLEEDFVSQLVTLSTHDHVLFFTNKGRVYKLKGYEVPELSRQSKGIPVVNAIELENDEVISTMIAVKDLESEDNFLVFATKRGVVKRSALSNFSRINRNGKIAISFREDDELIAVRLTSGQEDILIGTSHASLIRFPESTLRPLGRTATGVKGITLREGDEVVGLDVAHANSVDEVLVVTENGYGKRTPVNDYRLSNRGGKGIKTATITERNGNVVCITTVTGEEDLMIVTNAGVIIRLDVADISQNGRAAQGVRLIRLGDDQFVSTVAKVKEDAEDETNEDEQSTSTVSEDGTEQQREAVVNDETPGNAIHTEVIDSEENDEDGRIEVRQDFMDRVEEDIQQSSDEDEE.

The region spanning leucine 35 to leucine 501 is the Topo IIA-type catalytic domain. Tyrosine 123 (O-(5'-phospho-DNA)-tyrosine intermediate) is an active-site residue. A GyrA-box motif is present at residues glutamine 528 to glycine 534. The tract at residues lysine 811–glutamate 889 is disordered. A compositionally biased stretch (acidic residues) spans aspartate 813–glutamine 823. Basic and acidic residues predominate over residues aspartate 863–arginine 875. Over residues valine 876–glutamate 889 the composition is skewed to acidic residues.

Belongs to the type II topoisomerase GyrA/ParC subunit family. In terms of assembly, heterotetramer, composed of two GyrA and two GyrB chains. In the heterotetramer, GyrA contains the active site tyrosine that forms a transient covalent intermediate with DNA, while GyrB binds cofactors and catalyzes ATP hydrolysis.

It localises to the cytoplasm. The catalysed reaction is ATP-dependent breakage, passage and rejoining of double-stranded DNA.. Its function is as follows. A type II topoisomerase that negatively supercoils closed circular double-stranded (ds) DNA in an ATP-dependent manner to modulate DNA topology and maintain chromosomes in an underwound state. Negative supercoiling favors strand separation, and DNA replication, transcription, recombination and repair, all of which involve strand separation. Also able to catalyze the interconversion of other topological isomers of dsDNA rings, including catenanes and knotted rings. Type II topoisomerases break and join 2 DNA strands simultaneously in an ATP-dependent manner. This is DNA gyrase subunit A from Staphylococcus aureus (strain Mu50 / ATCC 700699).